Consider the following 529-residue polypeptide: GMP synthase [glutamine-hydrolyzing] (529 aa).

The region spanning 3–204 (TVAIVDFGSQ…FLKIAGCTRD (202 aa)) is the Glutamine amidotransferase type-1 domain. Residue cysteine 87 is the Nucleophile of the active site. Residues histidine 179 and glutamate 181 contribute to the active site. The 191-residue stretch at 205 to 395 (WTMGSFLHTQ…LGLPSAILDR (191 aa)) folds into the GMPS ATP-PPase domain. 232–238 (SGGVDSS) serves as a coordination point for ATP.

As to quaternary structure, homodimer.

It carries out the reaction XMP + L-glutamine + ATP + H2O = GMP + L-glutamate + AMP + diphosphate + 2 H(+). It participates in purine metabolism; GMP biosynthesis; GMP from XMP (L-Gln route): step 1/1. Functionally, catalyzes the synthesis of GMP from XMP. This chain is GMP synthase [glutamine-hydrolyzing], found in Anaplasma marginale (strain St. Maries).